Reading from the N-terminus, the 362-residue chain is Phospho-2-dehydro-3-deoxyheptonate aldolase (362 aa).

It belongs to the class-I DAHP synthase family.

The enzyme catalyses D-erythrose 4-phosphate + phosphoenolpyruvate + H2O = 7-phospho-2-dehydro-3-deoxy-D-arabino-heptonate + phosphate. It functions in the pathway metabolic intermediate biosynthesis; chorismate biosynthesis; chorismate from D-erythrose 4-phosphate and phosphoenolpyruvate: step 1/7. Functionally, stereospecific condensation of phosphoenolpyruvate (PEP) and D-erythrose-4-phosphate (E4P) giving rise to 3-deoxy-D-arabino-heptulosonate-7-phosphate (DAHP). In Haemophilus influenzae (strain ATCC 51907 / DSM 11121 / KW20 / Rd), this protein is Phospho-2-dehydro-3-deoxyheptonate aldolase (aroG).